The sequence spans 1357 residues: DNA-directed RNA polymerase subunit beta (1357 aa).

It belongs to the RNA polymerase beta chain family. As to quaternary structure, the RNAP catalytic core consists of 2 alpha, 1 beta, 1 beta' and 1 omega subunit. When a sigma factor is associated with the core the holoenzyme is formed, which can initiate transcription.

It carries out the reaction RNA(n) + a ribonucleoside 5'-triphosphate = RNA(n+1) + diphosphate. DNA-dependent RNA polymerase catalyzes the transcription of DNA into RNA using the four ribonucleoside triphosphates as substrates. This chain is DNA-directed RNA polymerase subunit beta, found in Ectopseudomonas mendocina (strain ymp) (Pseudomonas mendocina).